We begin with the raw amino-acid sequence, 101 residues long: Small ribosomal subunit protein uS14 (101 aa).

This sequence belongs to the universal ribosomal protein uS14 family. In terms of assembly, part of the 30S ribosomal subunit. Contacts proteins S3 and S10.

In terms of biological role, binds 16S rRNA, required for the assembly of 30S particles and may also be responsible for determining the conformation of the 16S rRNA at the A site. In Acinetobacter baumannii (strain SDF), this protein is Small ribosomal subunit protein uS14.